Reading from the N-terminus, the 225-residue chain is UPF0758 protein NMC1174 (225 aa).

In terms of domain architecture, MPN spans 102–224 (VLSDPDTVAD…VRSFRQLGLM (123 aa)). Zn(2+) is bound by residues His-173, His-175, and Asp-186. The short motif at 173–186 (HNHPGGSPEPSQED) is the JAMM motif element.

The protein belongs to the UPF0758 family.

This chain is UPF0758 protein NMC1174, found in Neisseria meningitidis serogroup C / serotype 2a (strain ATCC 700532 / DSM 15464 / FAM18).